The sequence spans 570 residues: Proline--tRNA ligase (570 aa).

Belongs to the class-II aminoacyl-tRNA synthetase family. ProS type 1 subfamily. In terms of assembly, homodimer.

It is found in the cytoplasm. The enzyme catalyses tRNA(Pro) + L-proline + ATP = L-prolyl-tRNA(Pro) + AMP + diphosphate. In terms of biological role, catalyzes the attachment of proline to tRNA(Pro) in a two-step reaction: proline is first activated by ATP to form Pro-AMP and then transferred to the acceptor end of tRNA(Pro). As ProRS can inadvertently accommodate and process non-cognate amino acids such as alanine and cysteine, to avoid such errors it has two additional distinct editing activities against alanine. One activity is designated as 'pretransfer' editing and involves the tRNA(Pro)-independent hydrolysis of activated Ala-AMP. The other activity is designated 'posttransfer' editing and involves deacylation of mischarged Ala-tRNA(Pro). The misacylated Cys-tRNA(Pro) is not edited by ProRS. In Clostridium perfringens (strain ATCC 13124 / DSM 756 / JCM 1290 / NCIMB 6125 / NCTC 8237 / Type A), this protein is Proline--tRNA ligase.